The primary structure comprises 434 residues: 3-phosphoshikimate 1-carboxyvinyltransferase (434 aa).

The 3-phosphoshikimate site is built by Lys-22, Ser-23, and Arg-27. Residue Lys-22 coordinates phosphoenolpyruvate. The phosphoenolpyruvate site is built by Gly-93 and Arg-121. Ser-168, Ser-169, Gln-170, Ser-199, Asp-320, and Lys-347 together coordinate 3-phosphoshikimate. Gln-170 lines the phosphoenolpyruvate pocket. Asp-320 (proton acceptor) is an active-site residue. Phosphoenolpyruvate contacts are provided by Arg-351, Arg-394, and Lys-419.

Belongs to the EPSP synthase family. As to quaternary structure, monomer.

It is found in the cytoplasm. The enzyme catalyses 3-phosphoshikimate + phosphoenolpyruvate = 5-O-(1-carboxyvinyl)-3-phosphoshikimate + phosphate. The protein operates within metabolic intermediate biosynthesis; chorismate biosynthesis; chorismate from D-erythrose 4-phosphate and phosphoenolpyruvate: step 6/7. Its function is as follows. Catalyzes the transfer of the enolpyruvyl moiety of phosphoenolpyruvate (PEP) to the 5-hydroxyl of shikimate-3-phosphate (S3P) to produce enolpyruvyl shikimate-3-phosphate and inorganic phosphate. The protein is 3-phosphoshikimate 1-carboxyvinyltransferase of Burkholderia multivorans (strain ATCC 17616 / 249).